A 262-amino-acid chain; its full sequence is Versicolorin reductase 1 (262 aa).

Residues I21, D67, N94, and R127 each contribute to the NADP(+) site. Catalysis depends on proton donor residues S143 and S144. Y158, K162, I191, and T193 together coordinate NADP(+). The Proton acceptor role is filled by Y158. The Lowers pKa of active site Tyr role is filled by K162.

It belongs to the short-chain dehydrogenases/reductases (SDR) family.

The protein localises to the cytoplasm. The protein resides in the cytosol. It carries out the reaction (4S,8R)-2,13,16,20-tetrahydroxy-7,9-dioxapentacyclo[10.8.0.0(3,10).0(4,8).0(14,19)]icosa-1(12),2,5,10,13,16,19-heptaen-18-one + NADPH + H(+) = (4S,8R,16R)-2,13,16,20-tetrahydroxy-7,9-dioxapentacyclo[10.8.0.0(3,10).0(4,8).0(14,19)]icosa-1(12),2,5,10,13,19-hexaen-18-one + NADP(+). The protein operates within mycotoxin biosynthesis; aflatoxin biosynthesis. Functionally, cytochrome P450 monooxygenase; part of the gene cluster that mediates the biosynthesis of aflatoxins, a group of polyketide-derived furanocoumarins, and part of the most toxic and carcinogenic compounds among the known mycotoxins. The four major aflatoxins produced by A.parasiticus are aflatoxin B1 (AFB1), aflatoxin B2 (AFB2), aflatoxin G1 (AFG1) and aflatoxin G2 (AFG2). Within the aflatoxin pathway, with the cytochrome P450 monooxygenase aflN, the versicolorin reductase aflM, is involved in conversion of VERA to demethylsterigmatocystin (DMST). The biosynthesis of aflatoxins begins with the norsolorinic acid synthase aflC that combines a hexanoyl starter unit produced by the fatty acid synthase aflA/aflB and 7 malonyl-CoA extender units to synthesize the precursor NOR. The second step is the conversion of NOR to averantin and requires the norsolorinic acid ketoreductase aflD, which catalyzes the dehydration of norsolorinic acid to form (1'S)-averantin. The norsolorinic acid reductases aflE and aflF may also play a role in the conversion of NOR to AVN. The cytochrome P450 monooxygenase aflG then catalyzes the hydroxylation of AVN to 5'hydroxyaverantin (HAVN). The next step is performed by the 5'-hydroxyaverantin dehydrogenase aflH that transforms HAVN to 5'-oxoaverantin (OAVN) which is further converted to averufin (AVF) by aflK that plays a dual role in the pathway, as a 5'-oxoaverantin cyclase that mediates conversion of 5'-oxoaverantin, as well as a versicolorin B synthase in a later step in the pathway. The averufin oxidase aflI catalyzes the conversion of AVF to versiconal hemiacetal acetate (VHA). VHA is then the substrate for the versiconal hemiacetal acetate esterase aflJ to yield versiconal (VAL). Versicolorin B synthase aflK then converts VAL to versicolorin B (VERB) by closing the bisfuran ring of aflatoxin which is required for DNA-binding, thus giving to aflatoxin its activity as a mutagen. Then, the activity of the versicolorin B desaturase aflL leads to versicolorin A (VERA). A branch point starts from VERB since it can also be converted to dihydrodemethylsterigmatocystin (DMDHST), probably also by aflL, VERA being a precursor for aflatoxins B1 and G1, and DMDHST for aflatoxins B2 and G2. Next, the versicolorin reductase aflM and the cytochrome P450 monooxygenase aflN are involved in conversion of VERA to demethylsterigmatocystin (DMST). AflX and aflY seem also involved in this step, through probable aflX-mediated epoxide ring-opening step following versicolorin A oxidation and aflY-mediated Baeyer-Villiger oxidation required for the formation of the xanthone ring. The methyltransferase aflO then leads to the modification of DMST to sterigmatocystin (ST), and of DMDHST to dihydrosterigmatocystin (DHST). Both ST and DHST are then substrates of the O-methyltransferase aflP to yield O-methylsterigmatocystin (OMST) and dihydro-O-methylsterigmatocystin (DHOMST), respectively. Finally OMST is converted to aflatoxins B1 and G1, and DHOMST to aflatoxins B2 and G2, via the action of several enzymes including O-methylsterigmatocystin oxidoreductase aflQ, the cytochrome P450 monooxygenase aflU, but also the NADH-dependent flavin oxidoreductase nadA which is specifically required for the synthesis of AFG1. This chain is Versicolorin reductase 1, found in Aspergillus parasiticus (strain ATCC 56775 / NRRL 5862 / SRRC 143 / SU-1).